The primary structure comprises 418 residues: Putative FBD-associated F-box protein At5g56560 (418 aa).

The F-box domain maps to 4–60 (QTRLSDLPDELLLKILSALPMFKVTLATRLISRRWKGPWKLVPDVTFDDDDIPFKSF). One can recognise an FBD domain in the interval 340–390 (LWEEPAVVAKCLSEHLEIFEWRQYEGTEQERNVAGYILANATCLKMATFST).

The sequence is that of Putative FBD-associated F-box protein At5g56560 from Arabidopsis thaliana (Mouse-ear cress).